A 143-amino-acid chain; its full sequence is Hemoglobin subunit alpha (143 aa).

S2 carries the N-acetylserine modification. In terms of domain architecture, Globin spans 2-143 (SLSDKDKAAV…LALALSEKYR (142 aa)). H60 contributes to the O2 binding site. Position 89 (H89) interacts with heme b.

It belongs to the globin family. In terms of assembly, heterotetramer of two alpha chains and two beta chains. In terms of tissue distribution, red blood cells.

In terms of biological role, involved in oxygen transport from gills to the various peripheral tissues. This is Hemoglobin subunit alpha (hba) from Cyprinus carpio (Common carp).